A 433-amino-acid polypeptide reads, in one-letter code: MDTDFPVSLSPAFLKVTRVRGQACPRVCAPNLPRSVTPSTSGRWATRAARSALHVVPAAGTAPAPPPPRALRPAPGPPRSAPLAPPLRRVVQSLGSSRGSRASCCSPSCLHGDSASQARGSEPSSSAERGWPSWSGLRGNSLAGRPEGWASGTPRLSKHPQRSLVPEFCIPEIPSNYLDKTEVVKAPKSRQNGRLLLCDPKEKLMSGSNKEKPQKSSFGRRPRLSSKLCTSPTQIPGGATVFSARKETSSKKIEDKVSLKSSENRPSSRSIETNRQFDLWSSSFLKESSGEVNKDLVLAKQEKNSEYCLEDIEENLSDSTDGDGEEDSNNEDDEGPAKKETRAPLELMAEFLRAEMGRDYQLAKKLCQMILIYEPENPVAKEFFSLIEEILLKEKAQEEEEEEESDEDSSSESEVDSSEDGSEDSSDECEDGS.

Disordered stretches follow at residues 56 to 86, 113 to 161, 189 to 273, 308 to 344, and 394 to 433; these read VPAA…LAPP, DSAS…KHPQ, SRQN…SIET, CLED…TRAP, and EKAQ…EDGS. Pro residues predominate over residues 63–85; it reads PAPPPPRALRPAPGPPRSAPLAP. Residues 114–127 show a composition bias toward polar residues; sequence SASQARGSEPSSSA. Basic and acidic residues-rich tracts occupy residues 199 to 214 and 244 to 258; these read DPKE…EKPQ and ARKE…DKVS. The span at 259–273 shows a compositional bias: polar residues; that stretch reads LKSSENRPSSRSIET. 2 stretches are compositionally biased toward acidic residues: residues 308–334 and 397–433; these read CLED…EDDE and QEEE…EDGS.

The polypeptide is Glutamate-rich protein 2 (Erich2) (Rattus norvegicus (Rat)).